Consider the following 358-residue polypeptide: uncharacterized protein (358 aa).

Over residues arginine 70–arginine 88 the composition is skewed to low complexity. The tract at residues arginine 70–alanine 93 is disordered. Residues proline 178 to glutamate 353 enclose the Macro domain.

This is an uncharacterized protein from Mycobacterium bovis (strain ATCC BAA-935 / AF2122/97).